Reading from the N-terminus, the 137-residue chain is Protein ApaG (137 aa).

Residues 2 to 126 enclose the ApaG domain; it reads PKYQFQVQVQ…FVLEAFSPGQ (125 aa).

This is Protein ApaG from Acidovorax sp. (strain JS42).